Reading from the N-terminus, the 486-residue chain is Protein nucleotidyltransferase YdiU (486 aa).

ATP contacts are provided by G90, G92, R93, K113, D125, G126, R176, and R183. The Proton acceptor role is filled by D252. Mg(2+) contacts are provided by N253 and D262. An ATP-binding site is contributed by D262.

The protein belongs to the SELO family. The cofactor is Mg(2+). Mn(2+) is required as a cofactor.

It carries out the reaction L-seryl-[protein] + ATP = 3-O-(5'-adenylyl)-L-seryl-[protein] + diphosphate. The enzyme catalyses L-threonyl-[protein] + ATP = 3-O-(5'-adenylyl)-L-threonyl-[protein] + diphosphate. It catalyses the reaction L-tyrosyl-[protein] + ATP = O-(5'-adenylyl)-L-tyrosyl-[protein] + diphosphate. The catalysed reaction is L-histidyl-[protein] + UTP = N(tele)-(5'-uridylyl)-L-histidyl-[protein] + diphosphate. It carries out the reaction L-seryl-[protein] + UTP = O-(5'-uridylyl)-L-seryl-[protein] + diphosphate. The enzyme catalyses L-tyrosyl-[protein] + UTP = O-(5'-uridylyl)-L-tyrosyl-[protein] + diphosphate. In terms of biological role, nucleotidyltransferase involved in the post-translational modification of proteins. It can catalyze the addition of adenosine monophosphate (AMP) or uridine monophosphate (UMP) to a protein, resulting in modifications known as AMPylation and UMPylation. In Pseudomonas aeruginosa (strain ATCC 15692 / DSM 22644 / CIP 104116 / JCM 14847 / LMG 12228 / 1C / PRS 101 / PAO1), this protein is Protein nucleotidyltransferase YdiU.